We begin with the raw amino-acid sequence, 122 residues long: MSLTKEDIINAIAEMSVKDVVELISAMEEKFGVSAAAATVAVAAGPAAAVEEQTEFTVMLSSVGDKKVNVIKAVRELTGLGLKEAKDLVEAAPKAVKEGVSKADAEAAKAKLEEAGALVEVK.

The protein belongs to the bacterial ribosomal protein bL12 family. Homodimer. Part of the ribosomal stalk of the 50S ribosomal subunit. Forms a multimeric L10(L12)X complex, where L10 forms an elongated spine to which 2 to 4 L12 dimers bind in a sequential fashion. Binds GTP-bound translation factors.

In terms of biological role, forms part of the ribosomal stalk which helps the ribosome interact with GTP-bound translation factors. Is thus essential for accurate translation. In Cellvibrio japonicus (strain Ueda107) (Pseudomonas fluorescens subsp. cellulosa), this protein is Large ribosomal subunit protein bL12.